The primary structure comprises 403 residues: G2/mitotic-specific cyclin-B3 (403 aa).

Disordered stretches follow at residues 1–86 (MPVA…APPA) and 102–122 (RKTP…PEEP). Residues 7–25 (SKAQSSKQPRASKAPSVTE) are compositionally biased toward polar residues. A D-box motif is present at residues 51–59 (RSAFGDITN).

Belongs to the cyclin family. Cyclin AB subfamily. Interacts with the CDK1 and CDK2 protein kinases. Ubiquitinated, leading to its degradation.

It localises to the nucleus. Cyclins are positive regulatory subunits of the cyclin-dependent kinases (CDKs), and thereby play an essential role in the control of the cell cycle, notably via their destruction during cell division. Could be involved at the G2/M (mitosis or meiosis) transition. G2/M cyclins accumulate steadily during G2 and are abruptly destroyed at mitosis. In Gallus gallus (Chicken), this protein is G2/mitotic-specific cyclin-B3 (CCNB3).